We begin with the raw amino-acid sequence, 2049 residues long: Kinetochore-associated protein rod-1 (2049 aa).

In terms of assembly, component of the RZZ complex composed of rod-1, czw-1 and zwl-1. Interacts (via N-terminus) with NDC80 complex component ndc-80.

The protein localises to the chromosome. The protein resides in the centromere. It is found in the kinetochore. It localises to the cytoplasm. Its subcellular location is the cytoskeleton. The protein localises to the spindle. In terms of biological role, essential component of the mitotic checkpoint, which prevents cells from prematurely exiting mitosis. Required for chromosome segregation, the assembly of the dynein-dynactin and mdf-1-mdf-2 complexes onto kinetochores and spindle pole separation. Plays a role in nuclear envelope breakdown. Its function related to the spindle assembly machinery and kinetochore-microtubule attachments likely depends on its association in the mitotic RZZ complex. The RZZ complex recruits the spindly-like protein spdl-1 to kinetochores. To prevent irregular chromosome segregation, the complex also inhibits the attachment of the kinetochore-associated NDC80 complex to microtubules. The recruitment of spdl-1 to kinetochores relieves this inhibition. Required for embryonic development. The sequence is that of Kinetochore-associated protein rod-1 from Caenorhabditis elegans.